A 37-amino-acid chain; its full sequence is Large ribosomal subunit protein bL36c (37 aa).

It belongs to the bacterial ribosomal protein bL36 family.

The protein resides in the plastid. Its subcellular location is the chloroplast. The protein is Large ribosomal subunit protein bL36c of Chloranthus spicatus (Chulantree).